The primary structure comprises 69 residues: Fumarase D (69 aa).

Belongs to the FumD family.

The catalysed reaction is (S)-malate = fumarate + H2O. Its function is as follows. In vitro catalyzes the addition of water to fumarate, forming malate. Cannot catalyze the reverse reaction. Cannot use the cis-isomer maleate as substrate. In Shigella flexneri, this protein is Fumarase D.